The sequence spans 491 residues: Putative ABC transporter ATP-binding protein TDE_0906 (491 aa).

2 ABC transporter domains span residues Ile2–Leu241 and Leu267–Leu491. ATP-binding positions include Gly36–Thr43 and Gly300–Thr307.

Belongs to the ABC transporter superfamily.

The protein resides in the cell inner membrane. In terms of biological role, probably part of an ABC transporter complex. Responsible for energy coupling to the transport system. This is Putative ABC transporter ATP-binding protein TDE_0906 from Treponema denticola (strain ATCC 35405 / DSM 14222 / CIP 103919 / JCM 8153 / KCTC 15104).